The sequence spans 279 residues: Movement protein (279 aa).

The interval 247-279 (ESEELNVESPPAAIGSSSASRSEAFRPQVVNGL) is disordered. Positions 254-268 (ESPPAAIGSSSASRS) are enriched in low complexity.

The protein belongs to the cucumovirus movement protein family.

Its subcellular location is the host cell junction. The protein resides in the host plasmodesma. In terms of biological role, transports viral genome to neighboring plant cells directly through plasmosdesmata, without any budding. The movement protein allows efficient cell to cell propagation, by bypassing the host cell wall barrier. Acts by forming a tubular structure at the host plasmodesmata, enlarging it enough to allow free passage of virion capsids. In Cucumis sativus (Cucumber), this protein is Movement protein.